The following is a 380-amino-acid chain: Erythronate-4-phosphate dehydrogenase (380 aa).

Substrate contacts are provided by S45 and T66. NAD(+) is bound by residues 126 to 127 (QV), D146, T175, 206 to 208 (ASR), and D232. R208 is an active-site residue. E237 is an active-site residue. H254 serves as the catalytic Proton donor. NAD(+) is bound at residue G257. Residue Y258 participates in substrate binding.

Belongs to the D-isomer specific 2-hydroxyacid dehydrogenase family. PdxB subfamily. Homodimer.

It is found in the cytoplasm. It catalyses the reaction 4-phospho-D-erythronate + NAD(+) = (R)-3-hydroxy-2-oxo-4-phosphooxybutanoate + NADH + H(+). The protein operates within cofactor biosynthesis; pyridoxine 5'-phosphate biosynthesis; pyridoxine 5'-phosphate from D-erythrose 4-phosphate: step 2/5. Catalyzes the oxidation of erythronate-4-phosphate to 3-hydroxy-2-oxo-4-phosphonooxybutanoate. This is Erythronate-4-phosphate dehydrogenase from Pseudomonas paraeruginosa (strain DSM 24068 / PA7) (Pseudomonas aeruginosa (strain PA7)).